A 77-amino-acid polypeptide reads, in one-letter code: uncharacterized protein (77 aa).

A helical membrane pass occupies residues 36–52 (FYQLILKVLSALLLLSV).

Its subcellular location is the membrane. This is an uncharacterized protein from Saccharomyces cerevisiae (strain ATCC 204508 / S288c) (Baker's yeast).